A 361-amino-acid polypeptide reads, in one-letter code: Holliday junction branch migration complex subunit RuvB (361 aa).

The segment at 1–21 (MHKDEDQRLLGAVPLPNDPDR) is disordered. Residues 1–184 (MHKDEDQRLL…FGIPIRLNFY (184 aa)) form a large ATPase domain (RuvB-L) region. Residues L23, R24, G65, K68, T69, T70, 131–133 (EDY), R174, Y184, and R221 each bind ATP. Position 69 (T69) interacts with Mg(2+). The segment at 185–255 (TIEELEYIVQ…IADEALSRLE (71 aa)) is small ATPAse domain (RuvB-S). The tract at residues 258-361 (HLGLDPLDRR…QTVLWDEADD (104 aa)) is head domain (RuvB-H). R294, R313, and R318 together coordinate DNA.

It belongs to the RuvB family. Homohexamer. Forms an RuvA(8)-RuvB(12)-Holliday junction (HJ) complex. HJ DNA is sandwiched between 2 RuvA tetramers; dsDNA enters through RuvA and exits via RuvB. An RuvB hexamer assembles on each DNA strand where it exits the tetramer. Each RuvB hexamer is contacted by two RuvA subunits (via domain III) on 2 adjacent RuvB subunits; this complex drives branch migration. In the full resolvosome a probable DNA-RuvA(4)-RuvB(12)-RuvC(2) complex forms which resolves the HJ.

Its subcellular location is the cytoplasm. The enzyme catalyses ATP + H2O = ADP + phosphate + H(+). Its function is as follows. The RuvA-RuvB-RuvC complex processes Holliday junction (HJ) DNA during genetic recombination and DNA repair, while the RuvA-RuvB complex plays an important role in the rescue of blocked DNA replication forks via replication fork reversal (RFR). RuvA specifically binds to HJ cruciform DNA, conferring on it an open structure. The RuvB hexamer acts as an ATP-dependent pump, pulling dsDNA into and through the RuvAB complex. RuvB forms 2 homohexamers on either side of HJ DNA bound by 1 or 2 RuvA tetramers; 4 subunits per hexamer contact DNA at a time. Coordinated motions by a converter formed by DNA-disengaged RuvB subunits stimulates ATP hydrolysis and nucleotide exchange. Immobilization of the converter enables RuvB to convert the ATP-contained energy into a lever motion, pulling 2 nucleotides of DNA out of the RuvA tetramer per ATP hydrolyzed, thus driving DNA branch migration. The RuvB motors rotate together with the DNA substrate, which together with the progressing nucleotide cycle form the mechanistic basis for DNA recombination by continuous HJ branch migration. Branch migration allows RuvC to scan DNA until it finds its consensus sequence, where it cleaves and resolves cruciform DNA. This Bartonella henselae (strain ATCC 49882 / DSM 28221 / CCUG 30454 / Houston 1) (Rochalimaea henselae) protein is Holliday junction branch migration complex subunit RuvB.